Here is a 348-residue protein sequence, read N- to C-terminus: Dihydroorotase (348 aa).

Histidine 17 and histidine 19 together coordinate Zn(2+). Substrate is bound by residues 19–21 (HLR) and asparagine 45. Residues lysine 103, histidine 140, and histidine 178 each contribute to the Zn(2+) site. Lysine 103 is modified (N6-carboxylysine). Histidine 140 provides a ligand contact to substrate. Substrate is bound at residue leucine 223. Residue aspartate 251 coordinates Zn(2+). The active site involves aspartate 251. 2 residues coordinate substrate: histidine 255 and alanine 267.

Belongs to the metallo-dependent hydrolases superfamily. DHOase family. Class II DHOase subfamily. As to quaternary structure, homodimer. The cofactor is Zn(2+).

It catalyses the reaction (S)-dihydroorotate + H2O = N-carbamoyl-L-aspartate + H(+). It functions in the pathway pyrimidine metabolism; UMP biosynthesis via de novo pathway; (S)-dihydroorotate from bicarbonate: step 3/3. In terms of biological role, catalyzes the reversible cyclization of carbamoyl aspartate to dihydroorotate. The polypeptide is Dihydroorotase (Salmonella heidelberg (strain SL476)).